The sequence spans 552 residues: MAAKEVVFGGEARARMVEGVNILANAVKVTLGPKGRNVVIERSFGAPTVTKDGVSVAKEIELKDKLQNMGAQLVKEVASKTSDNAGDGTTTATVLAQAIVREGFKYVAAGINPMDLKRGIDKAVTALVAELKKASKPTTTSKEIAQVGSISANADETIGKLIADAMDKVGKEGVITVEDGKSLESELDVVEGMQFDRGYLSPYFINNPDKQAALLDNPFVLLFDKKISNIRDLLPTLEQVAKAGRPLLVIAEEVEGEALATLVVNTIRGILKVVAVKAPGFGDRRKAMLEDIAILTGGKVIAEEVGLTLEKVTLADLGQAKRIEVGKENTIIIDGAGAAGDIEARVKQVRVQIEEATSDYDREKLQERVAKLAGGVAVIKVGAATEVEMKEKKARVEDALHATRAAVEEGVVAGGGVAFLRARQAIGGTIKGDNADQDAGIKLVLKAIEAPLREIVNNAGGEASVVVNAVLAGKGNYGFNAANDTYGDMLELGILDPTKVTRTALQNAASVASLLLTTEAMVAEAPKDDAPAGGGGMPGMGGGMGGMGGMDM.

ATP is bound by residues 30 to 33 (TLGP), Lys51, 87 to 91 (DGTTT), Gly415, 480 to 482 (NAA), and Asp496.

It belongs to the chaperonin (HSP60) family. Forms a cylinder of 14 subunits composed of two heptameric rings stacked back-to-back. Interacts with the co-chaperonin GroES.

Its subcellular location is the cytoplasm. The enzyme catalyses ATP + H2O + a folded polypeptide = ADP + phosphate + an unfolded polypeptide.. Its function is as follows. Together with its co-chaperonin GroES, plays an essential role in assisting protein folding. The GroEL-GroES system forms a nano-cage that allows encapsulation of the non-native substrate proteins and provides a physical environment optimized to promote and accelerate protein folding. This is Chaperonin GroEL from Verminephrobacter eiseniae (strain EF01-2).